A 1887-amino-acid polypeptide reads, in one-letter code: MKPEVEQELAHILLTELLAYQFASPVRWIETQDVFLKDFNTERVVEIGPSPTLAGMAQRTLKNKYESYDAALSLHREILCYSKDAKEIYYTPDPSELAAKEEPAKEEAPAPTPAASAPAPAAAAPAPVAAAAPAAAAAEIADEPVKASLLLHVLVAHKLKKSLDSIPMSKTIKDLVGGKSTVQNEILGDLGKEFGTTPEKPEETPLEELAETFQDTFSGALGKQSSSLLSRLISSKMPGGFTITVARKYLQTRWGLPSGRQDGVLLVALSNEPAARLGSEADAKAFLDSMAQKYASIVGVDLSSAASASGAAGAGAAAGAAMIDAGALEEITKDHKVLARQQLQVLARYLKMDLDNGERKFLKEKDTVAELQAQLDYLNAELGEFFVNGVATSFSRKKARTFDSSWNWAKQSLLSLYFEIIHGVLKNVDREVVSEAINIMNRSNDALIKFMEYHISNTDETKGENYQLVKTLGEQLIENCKQVLDVDPVYKDVAKPTGPKTAIDKNGNITYSEEPREKVRKLSQYVQEMALGGPITKESQPTIEEDLTRVYKAISAQADKQDISSSTRVEFEKLYSDLMKFLESSKEIDPSQTTQLAGMDVEDALDKDSTKEVASLPNKSTISKTVSSTIPRETIPFLHLRKKTPAGDWKYDRQLSSLFLDGLEKAAFNGVTFKDKYVLITGAGKGSIGAEVLQGLLQGGAKVVVTTSRFSKQVTDYYQSIYAKYGAKGSTLIVVPFNQGSKQDVEALIEFIYDTEKNGGLGWDLDAIIPFAAIPEQGIELEHIDSKSEFAHRIMLTNILRMMGCVKKQKSARGIETRPAQVILPMSPNHGTFGGDGMYSESKLSLETLFNRWHSESWANQLTVCGAIIGWTRGTGLMSANNIIAEGIEKMGVRTFSQKEMAFNLLGLLTPEVVELCQKSPVMADLNGGLQFVPELKEFTAKLRKELVETSEVRKAVSIETALEHKVVNGNSADAAYAQVEIQPRANIQLDFPELKPYKQVKQIAPAELEGLLDLERVIVVTGFAEVGPWGSARTRWEMEAFGEFSLEGCVEMAWIMGFISYHNGNLKGRPYTGWVDSKTKEPVDDKDVKAKYETSILEHSGIRLIEPELFNGYNPEKKEMIQEVIVEEDLEPFEASKETAEQFKHQHGDKVDIFEIPETGEYSVKLLKGATLYIPKALRFDRLVAGQIPTGWNAKTYGISDDIISQVDPITLFVLVSVVEAFIASGITDPYEMYKYVHVSEVGNCSGSGMGGVSALRGMFKDRFKDEPVQNDILQESFINTMSAWVNMLLISSSGPIKTPVGACATSVESVDIGVETILSGKARICIVGGYDDFQEEGSFEFGNMKATSNTLEEFEHGRTPAEMSRPATTTRNGFMEAQGAGIQIIMQADLALKMGVPIYGIVAMAATATDKIGRSVPAPGKGILTTAREHHSSVKYASPNLNMKYRKRQLVTREAQIKDWVENELEALKLEAEEIPSEDQNEFLLERTREIHNEAESQLRAAQQQWGNDFYKRDPRIAPLRGALATYGLTIDDLGVASFHGTSTKANDKNESATINEMMKHLGRSEGNPVIGVFQKFLTGHPKGAAGAWMMNGALQILNSGIIPGNRNADNVDKILEQFEYVLYPSKTLKTDGVRAVSITSFGFGQKGGQAIVVHPDYLYGAITEDRYNEYVAKVSAREKSAYKFFHNGMIYNKLFVSKEHAPYTDELEEDVYLDPLARVSKDKKSGSLTFNSKNIQSKDSYINANTIETAKMIENMTKEKVSNGGVGVDVELITSINVENDTFIERNFTPQEIEYCSAQPSVQSSFAGTWSAKEAVFKSLGVKSLGGGAALKDIEIVRVNKNAPAVELHGNAKKAAEEAGVTDVKVSISHDDLQAVAVAVSTKK.

Lys37 participates in a covalent cross-link: Glycyl lysine isopeptide (Lys-Gly) (interchain with G-Cter in ubiquitin). Residue Ser50 is modified to Phosphoserine. The tract at residues Glu96 to Pro120 is disordered. A compositionally biased stretch (basic and acidic residues) spans Ala98–Ala108. The Carrier domain occupies Val145–Ala220. At Ser180 the chain carries O-(pantetheine 4'-phosphoryl)serine. At Ser523 the chain carries Phosphoserine. The beta-ketoacyl reductase stretch occupies residues Asp675–Gly874. At Ser958 the chain carries Phosphoserine. The Ketosynthase family 3 (KS3) domain occupies Gln1123 to His1657. Cys1305 acts as the For beta-ketoacyl synthase activity in catalysis. At Ser1440 the chain carries Phosphoserine. Catalysis depends on for beta-ketoacyl synthase activity residues His1542 and His1583. Residues Asp1772, Val1773, and Glu1774 each contribute to the Mg(2+) site. Residues Asp1772–Glu1774, Tyr1798, Ser1808, Glu1817–Ser1827, Arg1841–Lys1844, and Ile1871–His1873 each bind acetyl-CoA. Residues Ser1872 and His1873 each contribute to the Mg(2+) site.

This sequence belongs to the thiolase-like superfamily. Fungal fatty acid synthetase subunit alpha family. In terms of assembly, [Alpha(6)beta(6)] hexamers of two multifunctional subunits (alpha and beta). 4'-phosphopantetheine is transferred from CoA to a specific serine of the Acyl carrier domain by the C-terminal PPT domain. This modification is essential for activity because fatty acids are bound in thioester linkage to the sulfhydryl of the prosthetic group.

The catalysed reaction is acetyl-CoA + n malonyl-CoA + 2n NADPH + 4n H(+) = a long-chain-acyl-CoA + n CoA + n CO2 + 2n NADP(+).. It catalyses the reaction a fatty acyl-[ACP] + malonyl-[ACP] + H(+) = a 3-oxoacyl-[ACP] + holo-[ACP] + CO2. It carries out the reaction a (3R)-hydroxyacyl-[ACP] + NADP(+) = a 3-oxoacyl-[ACP] + NADPH + H(+). Its activity is regulated as follows. Inhibited by cerulenin by covalent binding to active site of the ketoacyl synthase (KS) region. In terms of biological role, fatty acid synthetase catalyzes the formation of long-chain fatty acids from acetyl-CoA, malonyl-CoA and NADPH. The alpha subunit contains domains for: acyl carrier protein, 3-oxoacyl-[acyl-carrier-protein] reductase, and 3-oxoacyl-[acyl-carrier-protein] synthase. This subunit coordinates the binding of the six beta subunits to the enzyme complex. The protein is Fatty acid synthase subunit alpha (FAS2) of Saccharomyces cerevisiae (strain ATCC 204508 / S288c) (Baker's yeast).